The primary structure comprises 190 residues: RING finger protein 227 (190 aa).

An RING-type zinc finger spans residues 18–81 (CNICFRPYNL…RRAVTCPFCR (64 aa)). A disordered region spans residues 108-147 (ARAEREGDPMGSPAKDSGEDGEDDDGEAESEKGAGPPSAG). Residues 126–135 (EDGEDDDGEA) show a composition bias toward acidic residues.

The protein is RING finger protein 227 of Mus musculus (Mouse).